The following is a 181-amino-acid chain: Nucleoside triphosphate/diphosphate phosphatase (181 aa).

The active-site Proton donor is Arg-26. Mg(2+) contacts are provided by Asn-90, Asp-106, Asp-108, Asp-110, Asp-123, and Glu-126.

It belongs to the Ntdp family. Requires Mg(2+) as cofactor.

The enzyme catalyses a ribonucleoside 5'-triphosphate + H2O = a ribonucleoside 5'-diphosphate + phosphate + H(+). The catalysed reaction is a ribonucleoside 5'-diphosphate + H2O = a ribonucleoside 5'-phosphate + phosphate + H(+). In terms of biological role, has nucleoside phosphatase activity towards nucleoside triphosphates and nucleoside diphosphates. This Ligilactobacillus salivarius (strain UCC118) (Lactobacillus salivarius) protein is Nucleoside triphosphate/diphosphate phosphatase.